The chain runs to 488 residues: Inosine-5'-monophosphate dehydrogenase (488 aa).

2 CBS domains span residues V95–I153 and M157–S214. NAD(+)-binding positions include D251 and G301 to G303. 2 residues coordinate K(+): G303 and G305. S306 contributes to the IMP binding site. C308 provides a ligand contact to K(+). C308 acts as the Thioimidate intermediate in catalysis. IMP contacts are provided by residues D341–G343, G364–S365, and Y388–G392. R404 functions as the Proton acceptor in the catalytic mechanism. E416 serves as a coordination point for IMP. The K(+) site is built by E470, S471, and H472.

It belongs to the IMPDH/GMPR family. Homotetramer. Requires K(+) as cofactor.

The enzyme catalyses IMP + NAD(+) + H2O = XMP + NADH + H(+). It functions in the pathway purine metabolism; XMP biosynthesis via de novo pathway; XMP from IMP: step 1/1. Mycophenolic acid (MPA) is a non-competitive inhibitor that prevents formation of the closed enzyme conformation by binding to the same site as the amobile flap. In contrast, mizoribine monophosphate (MZP) is a competitive inhibitor that induces the closed conformation. MPA is a potent inhibitor of mammalian IMPDHs but a poor inhibitor of the bacterial enzymes. MZP is a more potent inhibitor of bacterial IMPDH. Catalyzes the conversion of inosine 5'-phosphate (IMP) to xanthosine 5'-phosphate (XMP), the first committed and rate-limiting step in the de novo synthesis of guanine nucleotides, and therefore plays an important role in the regulation of cell growth. This Bacillus subtilis (strain 168) protein is Inosine-5'-monophosphate dehydrogenase.